We begin with the raw amino-acid sequence, 382 residues long: cAMP-dependent protein kinase type I-alpha regulatory subunit (382 aa).

Alanine 2 bears the N-acetylalanine mark. Residues 2–136 (ATSSSSSSEE…AALAKAIEKN (135 aa)) form a dimerization and phosphorylation region. The segment at 62 to 96 (TKQLLNQQKSGSRSDSREDEISPPPPMNPVVKGRR) is disordered. Positions 97–101 (RRGAI) match the Pseudophosphorylation motif motif. 3',5'-cyclic AMP contacts are provided by residues 138 to 255 (LFAH…SKVS), glutamate 203, arginine 212, 256 to 382 (ILES…SLSV), glutamate 327, and arginine 336.

The protein belongs to the cAMP-dependent kinase regulatory chain family. As to quaternary structure, the inactive form of the enzyme is composed of two regulatory chains and two catalytic chains. Activation by cAMP produces two active catalytic monomers and a regulatory dimer that binds four cAMP molecules. In terms of processing, the pseudophosphorylation site binds to the substrate-binding region of the catalytic chain but is not phosphorylated. The physiological significance of phosphorylations by other kinases is unclear.

It is found in the cell membrane. This Gallus gallus (Chicken) protein is cAMP-dependent protein kinase type I-alpha regulatory subunit (PRKAR1A).